The sequence spans 159 residues: Ribosomal RNA large subunit methyltransferase H (159 aa).

S-adenosyl-L-methionine is bound by residues L76, G108, and 127–132 (FGRLTY).

The protein belongs to the RNA methyltransferase RlmH family. As to quaternary structure, homodimer.

The protein localises to the cytoplasm. The enzyme catalyses pseudouridine(1915) in 23S rRNA + S-adenosyl-L-methionine = N(3)-methylpseudouridine(1915) in 23S rRNA + S-adenosyl-L-homocysteine + H(+). Specifically methylates the pseudouridine at position 1915 (m3Psi1915) in 23S rRNA. The chain is Ribosomal RNA large subunit methyltransferase H from Enterococcus faecalis (strain ATCC 700802 / V583).